Reading from the N-terminus, the 100-residue chain is Integration host factor subunit alpha (100 aa).

The protein belongs to the bacterial histone-like protein family. In terms of assembly, heterodimer of an alpha and a beta chain.

In terms of biological role, this protein is one of the two subunits of integration host factor, a specific DNA-binding protein that functions in genetic recombination as well as in transcriptional and translational control. In Ruegeria sp. (strain TM1040) (Silicibacter sp.), this protein is Integration host factor subunit alpha.